Here is a 300-residue protein sequence, read N- to C-terminus: Putative 1-phosphofructokinase (300 aa).

ATP-binding positions include Ser-214–Gly-219 and Gly-246–Asp-247. Catalysis depends on Asp-247, which acts as the Proton acceptor.

This sequence belongs to the carbohydrate kinase PfkB family.

The enzyme catalyses beta-D-fructose 1-phosphate + ATP = beta-D-fructose 1,6-bisphosphate + ADP + H(+). In terms of biological role, catalyzes the ATP-dependent phosphorylation of fructose-l-phosphate to fructose-l,6-bisphosphate. The protein is Putative 1-phosphofructokinase (fruK) of Mycoplasma pneumoniae (strain ATCC 29342 / M129 / Subtype 1) (Mycoplasmoides pneumoniae).